The chain runs to 2067 residues: Separin (2067 aa).

Disordered regions lie at residues 51–91 (RTAR…AQDV), 140–167 (KKDA…TDNE), 1316–1363 (DLEE…SVEA), and 1449–1478 (LEPK…TKAQ). Low complexity predominate over residues 55–86 (GTKATATNATASSRAKTTRTKSTSTSTTRTKT). 2 stretches are compositionally biased toward low complexity: residues 1333 to 1354 (TRQP…ARST) and 1449 to 1461 (LEPK…SSKS). Residues 1880-1975 (RRNGTYILNP…SGTLTEAGEY (96 aa)) enclose the Peptidase C50 domain. Cysteine 1964 is an active-site residue.

It localises to the nucleus. It catalyses the reaction All bonds known to be hydrolyzed by this endopeptidase have arginine in P1 and an acidic residue in P4. P6 is often occupied by an acidic residue or by a hydroxy-amino-acid residue, the phosphorylation of which enhances cleavage.. Required for nuclear division. Could function in the mitotic spindle. The chain is Separin (bimB) from Emericella nidulans (strain FGSC A4 / ATCC 38163 / CBS 112.46 / NRRL 194 / M139) (Aspergillus nidulans).